A 151-amino-acid chain; its full sequence is UPF0208 membrane protein YE1335 (151 aa).

2 consecutive transmembrane segments (helical) span residues 46–66 (FGIRFMPPLAIFTLTWQIALG) and 69–89 (LGPAIATALFACGLPLQGLWW).

Belongs to the UPF0208 family.

The protein resides in the cell inner membrane. The polypeptide is UPF0208 membrane protein YE1335 (Yersinia enterocolitica serotype O:8 / biotype 1B (strain NCTC 13174 / 8081)).